Here is a 266-residue protein sequence, read N- to C-terminus: MRQKTSSNKKKQKNTNNISLRRKLGLMYKKAILGLKIVLMIFVCLFVFTKYFTSIKTYLITNIYQITTKLGFRLENVIIEGQQNVDELTILKVLNANKRSSIFALKLDEISNNLKKSKWIKEVYVSRRLPNTVYIKLFEREPIAIWQINNQLFLVDEEGYKISKDIQPFSHLLHVVGEGANIYASQLVLELKKYPALLNKTLVAIRVGDRRWDLNLKGNISIKLPEKEFEAALKYIDALNKNNRLFNQNYKALDLRDRNKYYIQKY.

At 1-31 (MRQKTSSNKKKQKNTNNISLRRKLGLMYKKA) the chain is on the cytoplasmic side. The helical transmembrane segment at 32–52 (ILGLKIVLMIFVCLFVFTKYF) threads the bilayer. Residues 53–266 (TSIKTYLITN…DRNKYYIQKY (214 aa)) are Periplasmic-facing. The region spanning 72–140 (FRLENVIIEG…NTVYIKLFER (69 aa)) is the POTRA domain.

It belongs to the FtsQ/DivIB family. FtsQ subfamily.

It is found in the cell inner membrane. Its function is as follows. Essential cell division protein. This Rickettsia typhi (strain ATCC VR-144 / Wilmington) protein is Cell division protein FtsQ.